The following is a 261-amino-acid chain: Putative imidazole glycerol phosphate synthase subunit hisF2 (261 aa).

The active site involves aspartate 138.

It belongs to the HisA/HisF family. Heterodimer of HisH and HisF.

It localises to the cytoplasm. It carries out the reaction 5-[(5-phospho-1-deoxy-D-ribulos-1-ylimino)methylamino]-1-(5-phospho-beta-D-ribosyl)imidazole-4-carboxamide + L-glutamine = D-erythro-1-(imidazol-4-yl)glycerol 3-phosphate + 5-amino-1-(5-phospho-beta-D-ribosyl)imidazole-4-carboxamide + L-glutamate + H(+). The protein operates within amino-acid biosynthesis; L-histidine biosynthesis; L-histidine from 5-phospho-alpha-D-ribose 1-diphosphate: step 5/9. Its function is as follows. IGPS catalyzes the conversion of PRFAR and glutamine to IGP, AICAR and glutamate. The HisF subunit catalyzes the cyclization activity that produces IGP and AICAR from PRFAR using the ammonia provided by the HisH subunit. The sequence is that of Putative imidazole glycerol phosphate synthase subunit hisF2 (hisF2) from Prochlorococcus marinus (strain MIT 9313).